Here is an 894-residue protein sequence, read N- to C-terminus: Microsomal triglyceride transfer protein large subunit (894 aa).

The first 21 residues, 1-21, serve as a signal peptide directing secretion; that stretch reads MILLAVLFLCFFSSYSASVKG. Residues 28-658 enclose the Vitellogenin domain; it reads LNNERLYKLT…IFQYIGKAEL (631 aa). Cysteine 174 and cysteine 194 are disulfide-bonded.

Interacts with PRAP1. As to quaternary structure, heterodimer; heterodimerizes with the protein disulfide isomerase (P4HB/PDI). Interacts with APOB. In terms of assembly, heterodimer; heterodimerizes with the protein disulfide isomerase (P4HB/PDI). Cleaved by signal peptidase between residues Gln-33 and Asn-34. In terms of tissue distribution, mainly expressed in the intestine and the liver, and at lower levels in white and brown fat cells. Expressed in heart. As to expression, ubiquitous, and is the major isoform in hematopoietic cells and adipocytes.

The protein localises to the endoplasmic reticulum. The protein resides in the golgi apparatus. The catalysed reaction is a 1,2-diacyl-sn-glycero-3-phosphocholine(in) = a 1,2-diacyl-sn-glycero-3-phosphocholine(out). It carries out the reaction a 1,2-diacyl-sn-glycero-3-phosphoethanolamine(in) = a 1,2-diacyl-sn-glycero-3-phosphoethanolamine(out). The enzyme catalyses a cholesterol ester(in) = a cholesterol ester(out). It catalyses the reaction a triacyl-sn-glycerol(in) = a triacyl-sn-glycerol(out). In terms of biological role, catalyzes the transport of triglyceride, cholesteryl ester, and phospholipid between phospholipid surfaces. Required for the assembly and secretion of plasma lipoproteins that contain apolipoprotein B. May be involved in regulating cholesteryl ester biosynthesis in cells that produce lipoproteins. Critical for the development of natural killer T (NKT) cells. Required for the assembly and secretion of plasma lipoproteins that contain apolipoprotein B. The sequence is that of Microsomal triglyceride transfer protein large subunit (Mttp) from Mus musculus (Mouse).